A 66-amino-acid polypeptide reads, in one-letter code: Small ribosomal subunit protein eS27 (66 aa).

4 residues coordinate Zn(2+): Cys-21, Cys-24, Cys-40, and Cys-43. Residues 21–43 (CPNCGNEQTVFSHATFPVRCLSC) form a C4-type zinc finger.

The protein belongs to the eukaryotic ribosomal protein eS27 family. In terms of assembly, part of the 30S ribosomal subunit. It depends on Zn(2+) as a cofactor.

In Sulfurisphaera tokodaii (strain DSM 16993 / JCM 10545 / NBRC 100140 / 7) (Sulfolobus tokodaii), this protein is Small ribosomal subunit protein eS27.